We begin with the raw amino-acid sequence, 1580 residues long: Ras GTPase-activating protein raskol (1580 aa).

Serine 164 is modified (phosphoserine). Threonine 167 bears the Phosphothreonine mark. The tract at residues 197-223 (LKRTKSVTKLERTKRGSGGLRGSRSHE) is disordered. Phosphoserine occurs at positions 221 and 224. The 59-residue stretch at 233-291 (STIDLSCTGAVGVAPVHQSVLGRRHCFQVRGGPRGERYYSCGSRQERDLWIYSLRKSIA) folds into the PH domain. The 119-residue stretch at 282–400 (WIYSLRKSIA…TSRLPCEQWY (119 aa)) folds into the C2 domain. Residues 490 to 700 (GLAGAFLTDV…ARMQQFLEII (211 aa)) enclose the Ras-GAP domain. Disordered regions lie at residues 764–819 (GMGT…QPQH), 857–892 (LLQQ…HQHP), 904–1023 (AGNQ…SYDD), 1112–1218 (ANHH…QQFG), 1284–1313 (LSGG…YGRL), 1334–1443 (VGYG…LGKS), and 1561–1580 (YETQ…QKPQ). Residues 776-805 (ATSSTHSIASENQENRNPGSSGSHAGSNSE) are compositionally biased toward polar residues. Composition is skewed to low complexity over residues 806–818 (QLLP…AQPQ), 857–885 (LLQQ…GHQQ), and 926–939 (SSSL…LLHG). Over residues 940 to 954 (HQQHAHHPQQLHPHH) the composition is skewed to basic residues. Residues 987 to 1020 (TSTPSSTRSRTLPRNGNPNANGNVGSSNNNQSGS) show a composition bias toward low complexity. The span at 1140–1150 (SAKSSHCSSGY) shows a compositional bias: polar residues. Low complexity predominate over residues 1151-1169 (QSISTNPSPSQSSSPVESQ). Serine 1158 and serine 1164 each carry phosphoserine. Positions 1186-1206 (PSYQLQPQTGSSRSSAQSNTH) are enriched in polar residues. Composition is skewed to low complexity over residues 1207 to 1216 (QQQQQQQQQQ), 1285 to 1299 (SGGS…ASTS), and 1351 to 1362 (HQQQQNPMQQQQ). Residues 1363–1372 (QRERDQEHKQ) are compositionally biased toward basic and acidic residues. Low complexity predominate over residues 1374–1388 (AGSVAGSVGSATSAA). Residues 1396-1415 (SARTLSDSSTDTEGHCNQLQ) are compositionally biased toward polar residues. Phosphoserine is present on residues serine 1401 and serine 1403. Gly residues predominate over residues 1427-1438 (GGSGGGGAGSEQ). Residues 1563–1580 (TQQQQQQHQAPPKTQKPQ) show a composition bias toward low complexity.

Its subcellular location is the cytoplasm. The protein resides in the cell membrane. It is found in the apical cell membrane. Functionally, GTPase-activating protein, which acts as a negative regulator for some members of the Ras family. Probably decreases their signaling activity by stimulating their intrinsic GTPase activity, thereby lowering the levels of the GTP-bound active form. Functions with DE-cadherin (shg) to promote embryonic border cell (BC) migration and adhesion by regulating the distribution of actin protrusions in BCs. Promotes shg-mediated adhesion at the BC interfaces and likely maintains BC cluster adhesion during BC detachment from the follicular epithelium and subsequent BC migration. Also required for restricting the development of actin-rich protrusions to the front of migrating BC clusters thus ensuring unidirectional BC migration. Possibly functions by suppressing Rac1 signaling in non-leading BCs, thus limiting its activity to leading BCs where it initiates localized actin cytoskeleton remodeling to produce the polarized protrusions. The chain is Ras GTPase-activating protein raskol from Drosophila melanogaster (Fruit fly).